A 430-amino-acid chain; its full sequence is MKTTIKQAKDHLNQDVTIGAWLTNKRSSGKIAFLQLRDGTGFMQGVVVKSEVDEEVFKLAKEITQESSLYVTGTITEDNRSDLGYEMQVKSIEVISEAHDYPITPKNHGTEFLMDHRHLWLRSKKQHAVMKIRNEVIRATYEFFNKDGFTKVDPPILTASAPEGTSELFLTKYFDQDAFLSQSGQLYLEAAAMAHGKVFSFGPTFRAEKSKTRRHLIEFWMIEGEMAFTNHAESLEIQEQYVTHVVKSVLENCKLELKILERDTSKLEKVATPFPRISYDDAIEFLKAEGFDDIEWGEDFGAPHETAIANHYDLPVFITNYPTKIKPFYMQPNPENEETVLCADLIAPEGYGEIIGGSERVDDLELLEQRVKEHGLDEEAYSYYLDLRRYGSVPHCGFGLGLERTVAWISGVEHVRETAPFPRLLNRLYP.

It belongs to the class-II aminoacyl-tRNA synthetase family. As to quaternary structure, homodimer.

It is found in the cytoplasm. It carries out the reaction tRNA(Asn) + L-asparagine + ATP = L-asparaginyl-tRNA(Asn) + AMP + diphosphate + H(+). In Staphylococcus aureus (strain bovine RF122 / ET3-1), this protein is Asparagine--tRNA ligase.